Consider the following 769-residue polypeptide: Elongation factor G, mitochondrial (769 aa).

The transit peptide at 1–42 directs the protein to the mitochondrion; that stretch reads MSKFLRGISSISSASLKARASNFGVFHGVCSARNLHQSRLCL. The tr-type G domain occupies 74–356; it reads TRLRNIGVSA…AVVDYLPQPN (283 aa). GTP is bound by residues 83 to 90, 154 to 158, and 208 to 211; these read AHIDSGKT, DTPGH, and NKMD.

Belongs to the TRAFAC class translation factor GTPase superfamily. Classic translation factor GTPase family. EF-G/EF-2 subfamily.

Its subcellular location is the mitochondrion. The protein operates within protein biosynthesis; polypeptide chain elongation. Its function is as follows. Mitochondrial GTPase that catalyzes the GTP-dependent ribosomal translocation step during translation elongation. During this step, the ribosome changes from the pre-translocational (PRE) to the post-translocational (POST) state as the newly formed A-site-bound peptidyl-tRNA and P-site-bound deacylated tRNA move to the P and E sites, respectively. Catalyzes the coordinated movement of the two tRNA molecules, the mRNA and conformational changes in the ribosome. The chain is Elongation factor G, mitochondrial from Debaryomyces hansenii (strain ATCC 36239 / CBS 767 / BCRC 21394 / JCM 1990 / NBRC 0083 / IGC 2968) (Yeast).